The chain runs to 248 residues: 23S rRNA (guanosine-2'-O-)-methyltransferase RlmB (248 aa).

Residues G198, L218, and L227 each coordinate S-adenosyl-L-methionine.

Belongs to the class IV-like SAM-binding methyltransferase superfamily. RNA methyltransferase TrmH family. RlmB subfamily.

Its subcellular location is the cytoplasm. The enzyme catalyses guanosine(2251) in 23S rRNA + S-adenosyl-L-methionine = 2'-O-methylguanosine(2251) in 23S rRNA + S-adenosyl-L-homocysteine + H(+). In terms of biological role, specifically methylates the ribose of guanosine 2251 in 23S rRNA. This Pseudomonas aeruginosa (strain ATCC 15692 / DSM 22644 / CIP 104116 / JCM 14847 / LMG 12228 / 1C / PRS 101 / PAO1) protein is 23S rRNA (guanosine-2'-O-)-methyltransferase RlmB.